Reading from the N-terminus, the 315-residue chain is MHSLRLILMSIQLLCYLLLCPVDATSHGEATSVSTVLPPSKLGYQMQTSDKPLSCQMLLPKSLPGFTYMPPVSKFLVGLALRNALEAAGCQAEVWALQLQLYRLGGVEATQALIHHLQELQKSGHTDREVSVDALSSALQLLAWEQPGPKRAKRSISNTDCDNDQEQSVHNVVDLLPAVGTYYNLGTALYYAIKNCSDKAKERGRDGAIDLGYDLLMAMVGASGGPAGAVITAALKPAMKAGVQRLIQYYYDEKEVTTPQPEVTTHQPETGKDATTDIGVVEEIAMSNFVSEVESTTSNWEWPLLKNYGVLAYKR.

A signal peptide spans 1–24 (MHSLRLILMSIQLLCYLLLCPVDA). The propeptide occupies 25 to 154 (TSHGEATSVS…EQPGPKRAKR (130 aa)).

Belongs to the apolipoprotein F family. As to expression, liver.

Its subcellular location is the secreted. In terms of biological role, minor apolipoprotein that associates with LDL. Inhibits cholesteryl ester transfer protein (CETP) activity and appears to be an important regulator of cholesterol transport. Also associates to a lesser degree with VLDL, Apo-AI and Apo-AII. The polypeptide is Apolipoprotein F (Apof) (Mus musculus (Mouse)).